We begin with the raw amino-acid sequence, 475 residues long: Exodeoxyribonuclease 7 large subunit (475 aa).

Belongs to the XseA family. In terms of assembly, heterooligomer composed of large and small subunits.

It is found in the cytoplasm. It catalyses the reaction Exonucleolytic cleavage in either 5'- to 3'- or 3'- to 5'-direction to yield nucleoside 5'-phosphates.. In terms of biological role, bidirectionally degrades single-stranded DNA into large acid-insoluble oligonucleotides, which are then degraded further into small acid-soluble oligonucleotides. This chain is Exodeoxyribonuclease 7 large subunit, found in Bartonella henselae (strain ATCC 49882 / DSM 28221 / CCUG 30454 / Houston 1) (Rochalimaea henselae).